We begin with the raw amino-acid sequence, 145 residues long: Group IID secretory phospholipase A2 (145 aa).

The N-terminal stretch at 1–20 (MELALLCGLVVMAGVIPIQG) is a signal peptide. 7 disulfide bridges follow: cysteine 46–cysteine 138, cysteine 48–cysteine 64, cysteine 63–cysteine 118, cysteine 69–cysteine 145, cysteine 70–cysteine 111, cysteine 79–cysteine 104, and cysteine 97–cysteine 109. Residues histidine 47, glycine 49, and glycine 51 each contribute to the Ca(2+) site. Residue histidine 67 is part of the active site. Aspartate 68 contacts Ca(2+). Asparagine 89 carries N-linked (GlcNAc...) asparagine glycosylation. Aspartate 112 is a catalytic residue.

This sequence belongs to the phospholipase A2 family. Requires Ca(2+) as cofactor. Highly expressed in pancreas and spleen and less abundantly in colon, thymus, placenta, small intestine, and prostate.

The protein resides in the secreted. It catalyses the reaction a 1,2-diacyl-sn-glycero-3-phosphoethanolamine + H2O = a 1-acyl-sn-glycero-3-phosphoethanolamine + a fatty acid + H(+). The catalysed reaction is 1-hexadecanoyl-2-(9Z-octadecenoyl)-sn-glycero-3-phosphoethanolamine + H2O = 1-hexadecanoyl-sn-glycero-3-phosphoethanolamine + (9Z)-octadecenoate + H(+). It carries out the reaction 1-hexadecanoyl-2-(9Z,12Z-octadecadienoyl)-sn-glycero-3-phosphoethanolamine + H2O = 1-hexadecanoyl-sn-glycero-3-phosphoethanolamine + (9Z,12Z)-octadecadienoate + H(+). The enzyme catalyses 1,2-dihexadecanoyl-sn-glycero-3-phospho-(1'-sn-glycerol) + H2O = 1-hexadecanoyl-sn-glycero-3-phospho-(1'-sn-glycerol) + hexadecanoate + H(+). It catalyses the reaction 1-hexadecanoyl-2-(9Z-octadecenoyl)-sn-glycero-3-phospho-(1'-sn-glycerol) + H2O = 1-hexadecanoyl-sn-glycero-3-phospho-(1'-sn-glycerol) + (9Z)-octadecenoate + H(+). The catalysed reaction is a 1,2-diacyl-sn-glycero-3-phosphocholine + H2O = a 1-acyl-sn-glycero-3-phosphocholine + a fatty acid + H(+). It carries out the reaction 1,2-dihexadecanoyl-sn-glycero-3-phosphocholine + H2O = 1-hexadecanoyl-sn-glycero-3-phosphocholine + hexadecanoate + H(+). The enzyme catalyses 1-hexadecanoyl-2-(9Z-octadecenoyl)-sn-glycero-3-phosphocholine + H2O = 1-hexadecanoyl-sn-glycero-3-phosphocholine + (9Z)-octadecenoate + H(+). It catalyses the reaction 1-hexadecanoyl-2-(9Z,12Z-octadecadienoyl)-sn-glycero-3-phosphocholine + H2O = (9Z,12Z)-octadecadienoate + 1-hexadecanoyl-sn-glycero-3-phosphocholine + H(+). The catalysed reaction is 1-hexadecanoyl-2-(4Z,7Z,10Z,13Z,16Z,19Z-docosahexaenoyl)-sn-glycero-3-phosphocholine + H2O = (4Z,7Z,10Z,13Z,16Z,19Z)-docosahexaenoate + 1-hexadecanoyl-sn-glycero-3-phosphocholine + H(+). Secretory calcium-dependent phospholipase A2 that primarily targets extracellular lipids, exerting anti-inflammatory and immunosuppressive functions. Hydrolyzes the ester bond of the fatty acyl group attached at sn-2 position of phospholipids (phospholipase A2 activity) with preference for phosphatidylethanolamines and phosphatidylglycerols over phosphatidylcholines. In draining lymph nodes, selectively hydrolyzes diacyl and alkenyl forms of phosphatidylethanolamines, releasing omega-3 polyunsaturated fatty acids (PUFAs) such as eicosapentaenoate and docosahexaenoate that are precursors of the anti-inflammatory lipid mediators, resolvins. During the resolution phase of acute inflammation drives docosahexaenoate-derived resolvin D1 synthesis, which suppresses dendritic cell activation and T-helper 1 immune response. May act in an autocrine and paracrine manner. Via a mechanism independent of its catalytic activity, promotes differentiation of regulatory T cells (Tregs) and participates in the maintenance of immune tolerance. May contribute to lipid remodeling of cellular membranes and generation of lipid mediators involved in pathogen clearance. Displays bactericidal activity against Gram-positive bacteria by directly hydrolyzing phospholipids of the bacterial membrane. This Homo sapiens (Human) protein is Group IID secretory phospholipase A2 (PLA2G2D).